Here is a 151-residue protein sequence, read N- to C-terminus: Ribosome maturation factor RimP (151 aa).

Belongs to the RimP family.

It is found in the cytoplasm. Functionally, required for maturation of 30S ribosomal subunits. This chain is Ribosome maturation factor RimP, found in Aliivibrio salmonicida (strain LFI1238) (Vibrio salmonicida (strain LFI1238)).